A 371-amino-acid chain; its full sequence is Bifunctional chorismate mutase/prephenate dehydratase (371 aa).

The 92-residue stretch at 1-92 (MTLKNALLAF…DSVLTQKKWI (92 aa)) folds into the Chorismate mutase domain. Substrate contacts are provided by Arg-11, Arg-28, Lys-39, Asp-48, Glu-52, Ser-84, and Gln-88. The region spanning 104-284 (KISFLGSFGS…NITQFIILAQ (181 aa)) is the Prephenate dehydratase domain. The interval 285–371 (KKTYITNKKT…IKCIKILGCF (87 aa)) is regulatory.

The protein localises to the cytoplasm. The catalysed reaction is chorismate = prephenate. It carries out the reaction prephenate + H(+) = 3-phenylpyruvate + CO2 + H2O. The protein operates within amino-acid biosynthesis; L-phenylalanine biosynthesis; phenylpyruvate from prephenate: step 1/1. It participates in metabolic intermediate biosynthesis; prephenate biosynthesis; prephenate from chorismate: step 1/1. Catalyzes the Claisen rearrangement of chorismate to prephenate and the decarboxylation/dehydration of prephenate to phenylpyruvate. The protein is Bifunctional chorismate mutase/prephenate dehydratase (pheA) of Buchnera aphidicola subsp. Baizongia pistaciae (strain Bp).